The primary structure comprises 668 residues: Alpha-1,4-glucan:maltose-1-phosphate maltosyltransferase (668 aa).

A disordered region spans residues 263-288 (RKGRNNSLTPAPDDPGSPYAIGSEEG). Residues lysine 264, glutamine 324, and aspartate 359 each coordinate alpha-maltose 1-phosphate. The active-site Nucleophile is the aspartate 395. Asparagine 396 is a binding site for alpha-maltose 1-phosphate. Catalysis depends on glutamate 424, which acts as the Proton donor. 535–536 (KY) contacts alpha-maltose 1-phosphate.

This sequence belongs to the glycosyl hydrolase 13 family. GlgE subfamily. Homodimer.

The enzyme catalyses alpha-maltose 1-phosphate + [(1-&gt;4)-alpha-D-glucosyl](n) = [(1-&gt;4)-alpha-D-glucosyl](n+2) + phosphate. Functionally, maltosyltransferase that uses maltose 1-phosphate (M1P) as the sugar donor to elongate linear or branched alpha-(1-&gt;4)-glucans. Is involved in a branched alpha-glucan biosynthetic pathway from trehalose, together with TreS, Mak and GlgB. The sequence is that of Alpha-1,4-glucan:maltose-1-phosphate maltosyltransferase from Cereibacter sphaeroides (strain ATCC 17023 / DSM 158 / JCM 6121 / CCUG 31486 / LMG 2827 / NBRC 12203 / NCIMB 8253 / ATH 2.4.1.) (Rhodobacter sphaeroides).